We begin with the raw amino-acid sequence, 180 residues long: Transcriptional repressor NrdR (180 aa).

Residues 3-34 (CPYCQNTSSRVLESRSTEAGQSIRRRRECLQC) fold into a zinc finger. The 91-residue stretch at 49–139 (ISVLKKDKSK…VYGEFKGITD (91 aa)) folds into the ATP-cone domain. The tract at residues 148 to 180 (QQEERESSSSPEWSDAGEEATVIEDSSQVMASS) is disordered. The span at 171–180 (EDSSQVMASS) shows a compositional bias: polar residues.

Belongs to the NrdR family. Requires Zn(2+) as cofactor.

In terms of biological role, negatively regulates transcription of bacterial ribonucleotide reductase nrd genes and operons by binding to NrdR-boxes. The chain is Transcriptional repressor NrdR from Gloeothece citriformis (strain PCC 7424) (Cyanothece sp. (strain PCC 7424)).